The chain runs to 199 residues: dTTP/UTP pyrophosphatase (199 aa).

D73 (proton acceptor) is an active-site residue.

This sequence belongs to the Maf family. YhdE subfamily. The cofactor is a divalent metal cation.

The protein localises to the cytoplasm. It catalyses the reaction dTTP + H2O = dTMP + diphosphate + H(+). The catalysed reaction is UTP + H2O = UMP + diphosphate + H(+). Its function is as follows. Nucleoside triphosphate pyrophosphatase that hydrolyzes dTTP and UTP. May have a dual role in cell division arrest and in preventing the incorporation of modified nucleotides into cellular nucleic acids. This chain is dTTP/UTP pyrophosphatase, found in Caldicellulosiruptor saccharolyticus (strain ATCC 43494 / DSM 8903 / Tp8T 6331).